Here is a 430-residue protein sequence, read N- to C-terminus: Histidinol dehydrogenase (430 aa).

NAD(+) is bound by residues Tyr130, Gln191, and Asn214. Substrate-binding residues include Ser237, Gln259, and His262. Positions 259 and 262 each coordinate Zn(2+). Active-site proton acceptor residues include Glu327 and His328. The substrate site is built by His328, Asp361, Glu415, and His420. Asp361 is a Zn(2+) binding site. Residue His420 coordinates Zn(2+).

This sequence belongs to the histidinol dehydrogenase family. Zn(2+) serves as cofactor.

The catalysed reaction is L-histidinol + 2 NAD(+) + H2O = L-histidine + 2 NADH + 3 H(+). It functions in the pathway amino-acid biosynthesis; L-histidine biosynthesis; L-histidine from 5-phospho-alpha-D-ribose 1-diphosphate: step 9/9. In terms of biological role, catalyzes the sequential NAD-dependent oxidations of L-histidinol to L-histidinaldehyde and then to L-histidine. This Brucella abortus (strain 2308) protein is Histidinol dehydrogenase.